Reading from the N-terminus, the 437-residue chain is Vasoactive intestinal polypeptide receptor 2 (437 aa).

The signal sequence occupies residues 1–22 (MRASVVLTCYCWLLVRVSSIHP). Over 23-123 (ECRFHLEIQE…EDESKITFYI (101 aa)) the chain is Extracellular. Cystine bridges form between cysteine 37/cysteine 60, cysteine 51/cysteine 92, and cysteine 74/cysteine 108. Asparagine 57, asparagine 87, and asparagine 91 each carry an N-linked (GlcNAc...) asparagine glycan. Residues 124 to 149 (LVKAIYTLGYSVSLMSLTTGSIIICL) form a helical membrane-spanning segment. Residues 150–157 (FRKLHCTR) are Cytoplasmic-facing. A helical membrane pass occupies residues 158 to 179 (NYIHLNLFLSFMLRAISVLVKD). Topologically, residues 180–202 (SVLYSSSGTLRCHDQPGSWVGCK) are extracellular. Residues cysteine 201 and cysteine 270 are joined by a disulfide bond. Residues 203 to 227 (LSLVFFQYCIMANFYWLLVEGLYLH) form a helical membrane-spanning segment. Residues 228-238 (TLLVAILPPSR) are Cytoplasmic-facing. A helical membrane pass occupies residues 239 to 260 (CFLAYLLIGWGIPSVCIGAWIA). Over 261 to 279 (TRLSLEDTGCWDTNDHSIP) the chain is Extracellular. Residues 280 to 303 (WWVIRMPILISIVVNFALFISIVR) form a helical membrane-spanning segment. The Cytoplasmic portion of the chain corresponds to 304 to 324 (ILLQKLTSPDVGGNDQSQYKR). Residues 325-345 (LAKSTLLLIPLFGVHYMVFAA) form a helical membrane-spanning segment. The Extracellular segment spans residues 346-353 (FPIGISST). A helical transmembrane segment spans residues 354–377 (YQILFELCVGSFQGLVVAVLYCFL). Topologically, residues 378 to 437 (NSEVQCELKRRWRGLCLTQPGSRDYRLHSWSMSRNGSESALQIHRGSRTQSFLQSETSVI) are cytoplasmic.

Belongs to the G-protein coupled receptor 2 family. In terms of assembly, interacts with ADCYAP1/PACAP (via N-terminal extracellular domain); activated by PACAP27 and CAPAC38 neuropeptides. Interacts with VIP; the interaction results in VIPR1 activation. Mainly in the thalamus, hippocampus and in the suprachiasmatic nucleus.

It is found in the cell membrane. G protein-coupled receptor activated by the neuropeptides vasoactive intestinal peptide (VIP) and pituitary adenylate cyclase-activating polypeptide (ADCYAP1/PACAP). Binds VIP and both PACAP27 and PACAP38 bioactive peptides with the order of ligand affinity of VIP = PACAP38 &gt; PACAP27. Ligand binding causes a conformation change that triggers signaling via guanine nucleotide-binding proteins (G proteins) and modulates the activity of downstream effectors. Activates cAMP-dependent pathway. May be coupled to phospholipase C. This is Vasoactive intestinal polypeptide receptor 2 from Rattus norvegicus (Rat).